A 262-amino-acid polypeptide reads, in one-letter code: uncharacterized protein (262 aa).

The N-terminal stretch at 1-22 (MMNNSITLLLALLVGLVGFAFT) is a signal peptide.

This sequence belongs to the IIV-6 117L family.

This is an uncharacterized protein from Aedes vexans (Inland floodwater mosquito).